Consider the following 252-residue polypeptide: DNA-(apurinic or apyrimidinic site) lyase Nei2 (252 aa).

The active-site Schiff-base intermediate with DNA is the proline 2. Glutamate 3 acts as the Proton donor in catalysis. Lysine 51 acts as the Proton donor (in beta-elimination) in catalysis. The segment at 216–250 (WVYGRAGEPCRRCGTLIQTDRGGERVTYWCPVCQT) adopts an FPG-type zinc-finger fold. Residues cysteine 225, cysteine 228, cysteine 245, and cysteine 248 each coordinate Zn(2+).

This sequence belongs to the FPG family. Monomer. Zn(2+) serves as cofactor.

The enzyme catalyses 2'-deoxyribonucleotide-(2'-deoxyribose 5'-phosphate)-2'-deoxyribonucleotide-DNA = a 3'-end 2'-deoxyribonucleotide-(2,3-dehydro-2,3-deoxyribose 5'-phosphate)-DNA + a 5'-end 5'-phospho-2'-deoxyribonucleoside-DNA + H(+). Involved in base excision repair of DNA damaged by oxidation or by mutagenic agents. Acts as DNA glycosylase that recognizes and removes damaged bases. Its function is as follows. Involved in the repair of psoralen-UVA DNA cross-links. A lyase that cleaves single-stranded (ss)DNA but not double-stranded (ds)DNA with an abasic site. Has 5-hydroxyuracil (5-OH-U) glycosylase activity on ssDNA with 5-OH-U, with 10-fold less activity on dsDNA, but weak to no uracil glycosylase activity. Has weak glycosylase activity on thymine glycol and dihydrothymine residues in ssDNA. Cleaves the DNA backbone by beta-delta elimination to generate a single-strand break at the site of the removed base with both 3'- and 5'-phosphates. This Mycolicibacterium smegmatis (strain ATCC 700084 / mc(2)155) (Mycobacterium smegmatis) protein is DNA-(apurinic or apyrimidinic site) lyase Nei2.